Consider the following 218-residue polypeptide: NAD(P)H-quinone oxidoreductase subunit I (218 aa).

4Fe-4S ferredoxin-type domains are found at residues 55 to 84 (GRIHYEFDKCIACEVCVRVCPINLPVVDWV) and 95 to 124 (RNYSIDFGVCIFCGNCVEYCPTNCLSMTEE). [4Fe-4S] cluster-binding residues include C64, C67, C70, C74, C104, C107, C110, and C114. The interval 192–218 (LSLQQDSLQGDEGESLQDAPDQDQPKG) is disordered.

It belongs to the complex I 23 kDa subunit family. In terms of assembly, NDH-1 is composed of at least 11 different subunits. It depends on [4Fe-4S] cluster as a cofactor.

It is found in the cellular thylakoid membrane. The enzyme catalyses a plastoquinone + NADH + (n+1) H(+)(in) = a plastoquinol + NAD(+) + n H(+)(out). It catalyses the reaction a plastoquinone + NADPH + (n+1) H(+)(in) = a plastoquinol + NADP(+) + n H(+)(out). NDH-1 shuttles electrons from an unknown electron donor, via FMN and iron-sulfur (Fe-S) centers, to quinones in the respiratory and/or the photosynthetic chain. The immediate electron acceptor for the enzyme in this species is believed to be plastoquinone. Couples the redox reaction to proton translocation, and thus conserves the redox energy in a proton gradient. The polypeptide is NAD(P)H-quinone oxidoreductase subunit I (Prochlorococcus marinus (strain MIT 9303)).